A 343-amino-acid chain; its full sequence is N-acetyl-gamma-glutamyl-phosphate reductase (343 aa).

Cysteine 152 is a catalytic residue.

The protein belongs to the NAGSA dehydrogenase family. Type 1 subfamily.

Its subcellular location is the cytoplasm. It catalyses the reaction N-acetyl-L-glutamate 5-semialdehyde + phosphate + NADP(+) = N-acetyl-L-glutamyl 5-phosphate + NADPH + H(+). Its pathway is amino-acid biosynthesis; L-arginine biosynthesis; N(2)-acetyl-L-ornithine from L-glutamate: step 3/4. Functionally, catalyzes the NADPH-dependent reduction of N-acetyl-5-glutamyl phosphate to yield N-acetyl-L-glutamate 5-semialdehyde. This chain is N-acetyl-gamma-glutamyl-phosphate reductase, found in Methanopyrus kandleri (strain AV19 / DSM 6324 / JCM 9639 / NBRC 100938).